The primary structure comprises 389 residues: WAT1-related protein At1g21890 (389 aa).

The next 10 membrane-spanning stretches (helical) occupy residues 13 to 33, 40 to 60, 73 to 93, 102 to 122, 142 to 162, 191 to 211, 225 to 245, 260 to 280, 287 to 307, and 312 to 332; these read LAMI…MVSL, YVLA…FALF, IFLQ…NLYY, TFAS…AIIF, VITV…VDFI, WIPG…FFIL, LTTL…LVTV, FAAA…QGVV, VFVA…GVVV, and IHLG…TVVW. 2 EamA domains span residues 23 to 150 and 205 to 331; these read AGMY…GALL and WAGF…YTVV. The disordered stretch occupies residues 339–361; that stretch reads RMTDDDEDCKGLPIKSPVKPVDT.

Belongs to the drug/metabolite transporter (DMT) superfamily. Plant drug/metabolite exporter (P-DME) (TC 2.A.7.4) family.

The protein resides in the membrane. The chain is WAT1-related protein At1g21890 from Arabidopsis thaliana (Mouse-ear cress).